The following is a 324-amino-acid chain: Glyoxylate/hydroxypyruvate reductase B (324 aa).

Residues Arg237 and Glu266 contribute to the active site. The Proton donor role is filled by His285.

It belongs to the D-isomer specific 2-hydroxyacid dehydrogenase family. GhrB subfamily. As to quaternary structure, homodimer.

The protein localises to the cytoplasm. It catalyses the reaction glycolate + NADP(+) = glyoxylate + NADPH + H(+). The enzyme catalyses (R)-glycerate + NAD(+) = 3-hydroxypyruvate + NADH + H(+). It carries out the reaction (R)-glycerate + NADP(+) = 3-hydroxypyruvate + NADPH + H(+). Functionally, catalyzes the NADPH-dependent reduction of glyoxylate and hydroxypyruvate into glycolate and glycerate, respectively. The polypeptide is Glyoxylate/hydroxypyruvate reductase B (Salmonella typhi).